The primary structure comprises 296 residues: Enoyl-CoA hydratase domain-containing protein 2, mitochondrial (296 aa).

A mitochondrion-targeting transit peptide spans Met-1–Phe-17. Lys-101 is modified (N6-acetyllysine; alternate). The residue at position 101 (Lys-101) is an N6-succinyllysine; alternate.

It belongs to the enoyl-CoA hydratase/isomerase family.

Its subcellular location is the mitochondrion. The protein is Enoyl-CoA hydratase domain-containing protein 2, mitochondrial (Echdc2) of Mus musculus (Mouse).